A 1091-amino-acid polypeptide reads, in one-letter code: ATP-dependent helicase/deoxyribonuclease subunit B (1091 aa).

The protein belongs to the helicase family. AddB/RexB type 2 subfamily. Heterodimer of AddA and RexB. It depends on Mg(2+) as a cofactor.

Its function is as follows. The heterodimer acts as both an ATP-dependent DNA helicase and an ATP-dependent, dual-direction single-stranded exonuclease. Recognizes the chi site generating a DNA molecule suitable for the initiation of homologous recombination. This subunit has 5' -&gt; 3' nuclease activity but not helicase activity. This chain is ATP-dependent helicase/deoxyribonuclease subunit B, found in Streptococcus pneumoniae (strain Hungary19A-6).